The sequence spans 260 residues: Phosphatidate cytidylyltransferase (260 aa).

A run of 7 helical transmembrane segments spans residues 9 to 29 (IIALIVFLPVLLKGGLILMLF), 46 to 66 (MIKFLSIPGIISALGILIIML), 70 to 90 (AGSWVNDLQLKSLIAMSFILL), 102 to 122 (FMDAAFCLMSIAYVGIGFMYL), 130 to 150 (LHYILFAFLVVWLTDTGAYIF), 172 to 192 (FVGGLICSLIVPLVMMIFVDF), and 196 to 216 (LWLLLIITIILSMFGQLGDLV).

It belongs to the CDS family.

The protein localises to the cell membrane. It carries out the reaction a 1,2-diacyl-sn-glycero-3-phosphate + CTP + H(+) = a CDP-1,2-diacyl-sn-glycerol + diphosphate. The protein operates within phospholipid metabolism; CDP-diacylglycerol biosynthesis; CDP-diacylglycerol from sn-glycerol 3-phosphate: step 3/3. The chain is Phosphatidate cytidylyltransferase (cdsA) from Staphylococcus saprophyticus subsp. saprophyticus (strain ATCC 15305 / DSM 20229 / NCIMB 8711 / NCTC 7292 / S-41).